Reading from the N-terminus, the 216-residue chain is 3-isopropylmalate dehydratase small subunit (216 aa).

This sequence belongs to the LeuD family. LeuD type 1 subfamily. In terms of assembly, heterodimer of LeuC and LeuD.

The enzyme catalyses (2R,3S)-3-isopropylmalate = (2S)-2-isopropylmalate. It functions in the pathway amino-acid biosynthesis; L-leucine biosynthesis; L-leucine from 3-methyl-2-oxobutanoate: step 2/4. Its function is as follows. Catalyzes the isomerization between 2-isopropylmalate and 3-isopropylmalate, via the formation of 2-isopropylmaleate. This chain is 3-isopropylmalate dehydratase small subunit, found in Burkholderia mallei (strain NCTC 10247).